The chain runs to 244 residues: Proteasome subunit alpha type-5 (244 aa).

Belongs to the peptidase T1A family. In terms of assembly, the 26S proteasome consists of a 20S proteasome core and two 19S regulatory subunits. The 20S proteasome core is composed of 28 subunits that are arranged in four stacked rings, resulting in a barrel-shaped structure. The two end rings are each formed by seven alpha subunits, and the two central rings are each formed by seven beta subunits. The catalytic chamber with the active sites is on the inside of the barrel.

Its subcellular location is the cytoplasm. The protein resides in the nucleus. Its function is as follows. The proteasome is a multicatalytic proteinase complex which is characterized by its ability to cleave peptides with Arg, Phe, Tyr, Leu, and Glu adjacent to the leaving group at neutral or slightly basic pH. The proteasome has an ATP-dependent proteolytic activity. This is Proteasome subunit alpha type-5 (Prosalpha5) from Drosophila melanogaster (Fruit fly).